A 281-amino-acid chain; its full sequence is MQQDLLHRYLFDNLDVRGELVQIENAYNEMIANHNYPDAVKALLGELLVATCLLTATLKFEGEIAVQLQGDGPVKYAVINGDDKQNMRGIARLQSEVTGSTVKELIGQGYMVITITPTKGERYQGIVPLEHETLSECIEAYFEQSEQLKTRLWFATDTTEGNAKACGLFLQVLPVDKQKSIEDFAHLEALSHTIKDEELLELDANTVLTRLYHEDNPRVFEPQSIQFKCGCTREKTMTALVNIGQQALLDDVAEHGEIKISCHYCLKDYLFDEQDVKNIFN.

Disulfide bonds link Cys-229–Cys-231 and Cys-262–Cys-265.

Belongs to the HSP33 family. Post-translationally, under oxidizing conditions two disulfide bonds are formed involving the reactive cysteines. Under reducing conditions zinc is bound to the reactive cysteines and the protein is inactive.

The protein resides in the cytoplasm. Redox regulated molecular chaperone. Protects both thermally unfolding and oxidatively damaged proteins from irreversible aggregation. Plays an important role in the bacterial defense system toward oxidative stress. The sequence is that of 33 kDa chaperonin from Pseudoalteromonas translucida (strain TAC 125).